Here is a 402-residue protein sequence, read N- to C-terminus: GTPase Obg (402 aa).

Positions 1–159 (MRFIDEAIVT…KELKFELKVV (159 aa)) constitute an Obg domain. The OBG-type G domain occupies 160–334 (ADVGLIGLPN…VKYHLMNEIE (175 aa)). GTP is bound by residues 166–173 (GLPNAGKS), 191–195 (FTTLV), 213–216 (DIPG), 283–286 (NKID), and 315–317 (STL). Residues serine 173 and threonine 193 each contribute to the Mg(2+) site. The tract at residues 382–402 (AAFNNELDDDDDDGVEVVYAP) is disordered. Over residues 387-396 (ELDDDDDDGV) the composition is skewed to acidic residues.

Belongs to the TRAFAC class OBG-HflX-like GTPase superfamily. OBG GTPase family. As to quaternary structure, monomer. The cofactor is Mg(2+).

It is found in the cytoplasm. An essential GTPase which binds GTP, GDP and possibly (p)ppGpp with moderate affinity, with high nucleotide exchange rates and a fairly low GTP hydrolysis rate. Plays a role in control of the cell cycle, stress response, ribosome biogenesis and in those bacteria that undergo differentiation, in morphogenesis control. The sequence is that of GTPase Obg from Psychrobacter sp. (strain PRwf-1).